The sequence spans 269 residues: Flagellar brake protein YcgR (269 aa).

One can recognise a PilZ domain in the interval 134–254 (QRRNFYRVTT…SRLLIQRYIT (121 aa)).

This sequence belongs to the YcgR family. Monomer. Interacts with the flagellar basal bodies.

Its subcellular location is the bacterial flagellum basal body. In terms of biological role, acts as a flagellar brake, regulating swimming and swarming in a bis-(3'-5') cyclic diguanylic acid (c-di-GMP)-dependent manner. Binds 1 c-di-GMP dimer per subunit. Increasing levels of c-di-GMP lead to decreased motility. The polypeptide is Flagellar brake protein YcgR (Nitrosomonas eutropha (strain DSM 101675 / C91 / Nm57)).